Here is a 189-residue protein sequence, read N- to C-terminus: Glycerol-3-phosphate acyltransferase (189 aa).

5 helical membrane passes run 1–21 (MFWL…AILL), 51–71 (LAIL…LIAS), 77–97 (LQDQ…PLYF), 111–131 (MLLG…LLTF), and 151–171 (LLAW…LLIV).

The protein belongs to the PlsY family. As to quaternary structure, probably interacts with PlsX.

The protein localises to the cell inner membrane. The catalysed reaction is an acyl phosphate + sn-glycerol 3-phosphate = a 1-acyl-sn-glycero-3-phosphate + phosphate. The protein operates within lipid metabolism; phospholipid metabolism. Its function is as follows. Catalyzes the transfer of an acyl group from acyl-phosphate (acyl-PO(4)) to glycerol-3-phosphate (G3P) to form lysophosphatidic acid (LPA). This enzyme utilizes acyl-phosphate as fatty acyl donor, but not acyl-CoA or acyl-ACP. This chain is Glycerol-3-phosphate acyltransferase, found in Pseudomonas fluorescens (strain Pf0-1).